Reading from the N-terminus, the 259-residue chain is Bisphosphoglycerate mutase (259 aa).

Ser2 carries the N-acetylserine modification. N-linked (Glc) (glycation) lysine; in vitro glycosylation is found at Lys3 and Lys5. Residue 10–17 (RHGEGAWN) coordinates substrate. His11 functions as the Tele-phosphohistidine intermediate in the catalytic mechanism. The N-linked (Glc) (glycation) lysine; in vitro glycan is linked to Lys18. 23–24 (CS) is a binding site for substrate. N-linked (Glc) (glycation) lysine; in vitro glycosylation is present at Lys43. Residues Arg62, 89-92 (ERHY), Arg100, and 116-117 (RR) contribute to the substrate site. Glu89 (proton donor/acceptor) is an active-site residue. Residue Thr122 is modified to Phosphothreonine. N-linked (Glc) (glycation) lysine glycosylation is present at Lys159. 189–190 (GN) contacts substrate. The N-linked (Glc) (glycation) lysine; in vitro glycan is linked to Lys197.

It belongs to the phosphoglycerate mutase family. BPG-dependent PGAM subfamily. As to quaternary structure, homodimer. Post-translationally, glycation of Lys-159 in diabetic patients inactivates the enzyme. In terms of tissue distribution, expressed in red blood cells. Expressed in non-erythroid cells of the placenta; present in the syncytiotrophoblast layer of the placental villi at the feto-maternal interface (at protein level).

The enzyme catalyses (2R)-3-phospho-glyceroyl phosphate = (2R)-2,3-bisphosphoglycerate + H(+). It carries out the reaction (2R)-2-phosphoglycerate = (2R)-3-phosphoglycerate. With respect to regulation, at alkaline pH BPGM favors the synthase reaction; however, at lower pH the phosphatase reaction is dominant. Inhibited by citrate. In terms of biological role, plays a major role in regulating hemoglobin oxygen affinity by controlling the levels of its allosteric effector 2,3-bisphosphoglycerate (2,3-BPG). Also exhibits mutase (EC 5.4.2.11) activity. This chain is Bisphosphoglycerate mutase (BPGM), found in Homo sapiens (Human).